The sequence spans 329 residues: RING finger protein 225 (329 aa).

Residues 1–55 are disordered; the sequence is MPCPRPFWLRHSRAPQGSGPSSPGSLSAPRSPSRGEDQEEEEEEEGDGSPGSGPI. The segment covering 14–32 has biased composition (low complexity); sequence APQGSGPSSPGSLSAPRSP. Acidic residues predominate over residues 37-47; sequence DQEEEEEEEGD. Residues 64–112 form an RING-type zinc finger; the sequence is CLICVSSFDGVFKLPKRLDCGHVFCLECLARLSLATAGGGNAVACPVCR. The segment at 122 to 181 is disordered; sequence GLPALPTQSGLLPRDARAPPSRQGSVRFDRRRGLLYLRPPPPPPGPRKARAPPPPPPLRL. The span at 159–179 shows a compositional bias: pro residues; sequence RPPPPPPGPRKARAPPPPPPL. Residues 203–223 traverse the membrane as a helical segment; that stretch reads ALAVLVAAGLVVSGVYIFFLI. The disordered stretch occupies residues 248-329; the sequence is FPPRPPPGSP…RGARRLWGSQ (82 aa). Over residues 281-293 the composition is skewed to acidic residues; it reads DALEPEAGPEDPA. Basic and acidic residues predominate over residues 294 to 304; the sequence is EAERTLDRRSD.

It localises to the membrane. This is RING finger protein 225 from Homo sapiens (Human).